A 181-amino-acid polypeptide reads, in one-letter code: UPF0228 protein MA_3117 (181 aa).

Belongs to the UPF0228 family.

In Methanosarcina acetivorans (strain ATCC 35395 / DSM 2834 / JCM 12185 / C2A), this protein is UPF0228 protein MA_3117.